The following is a 527-amino-acid chain: Zinc finger CCCH-type with G patch domain-containing protein (527 aa).

A disordered region spans residues 97–126 (GEVSGSSSDMREREDEREEEDDGEVEGEVD). Acidic residues predominate over residues 111 to 125 (DEREEEDDGEVEGEV). The segment at 173–200 (QKSMKPCPFFLEDKCRFADNCRFSHGEV) adopts a C3H1-type zinc-finger fold. Residues 268–312 (LREDDLPSCSDSEDDDNGEGEAAFPRVLTQEEDWAPSRSSSAFGG) are disordered. Residues 317–363 (TRGIGSKLMLKMGYEYGKGLGKTSEGRVEPVLAVVLPKGKSLDQCAE) form the G-patch domain. Disordered stretches follow at residues 369–396 (TQRK…AHNT), 410–444 (LGNG…YKGG), and 505–527 (KAQE…MTEF). A compositionally biased stretch (basic residues) spans 384 to 393 (RNKRTRKARA). Residues 511-527 (AQRENRKADTHKKMTEF) are compositionally biased toward basic and acidic residues.

The protein localises to the nucleus. Transcription repressor that specifically binds the 5'-GGAG[GA]A[GA]A-3' consensus sequence. Represses transcription by recruiting the chromatin multiprotein complex NuRD to target promoters. Negatively regulates expression of EGFR, a gene involved in cell proliferation, survival and migration. The polypeptide is Zinc finger CCCH-type with G patch domain-containing protein (zgpat) (Salmo salar (Atlantic salmon)).